The primary structure comprises 853 residues: DNA mismatch repair protein MutS (853 aa).

Residue 614-621 participates in ATP binding; it reads GPNMGGKS.

The protein belongs to the DNA mismatch repair MutS family.

In terms of biological role, this protein is involved in the repair of mismatches in DNA. It is possible that it carries out the mismatch recognition step. This protein has a weak ATPase activity. The protein is DNA mismatch repair protein MutS of Cronobacter sakazakii (strain ATCC BAA-894) (Enterobacter sakazakii).